Here is a 435-residue protein sequence, read N- to C-terminus: CBL-interacting protein kinase 28 (435 aa).

Residues 11–265 (YVIGRQLGQG…ISRIKRSAWY (255 aa)) form the Protein kinase domain. ATP-binding positions include 17-25 (LGQGTFGKV) and K40. The active-site Proton acceptor is D133. An activation loop region spans residues 151-180 (DFGLSALAESRRQDGLLHTACGTPAYVAPE). Positions 283 to 329 (CTSEAPFSGPTICISSERNQEPPNLHNLNAFDIISLSTGFDLSGLFG) constitute an NAF domain. The segment at 334 to 363 (RRESLFTSRKPAAAVLVKLKELAKALNLKV) is PPI.

Belongs to the protein kinase superfamily. CAMK Ser/Thr protein kinase family. SNF1 subfamily. Mn(2+) is required as a cofactor.

It carries out the reaction L-seryl-[protein] + ATP = O-phospho-L-seryl-[protein] + ADP + H(+). It catalyses the reaction L-threonyl-[protein] + ATP = O-phospho-L-threonyl-[protein] + ADP + H(+). CIPK serine-threonine protein kinases interact with CBL proteins. Binding of a CBL protein to the regulatory NAF domain of CIPK protein lead to the activation of the kinase in a calcium-dependent manner. This chain is CBL-interacting protein kinase 28 (CIPK28), found in Oryza sativa subsp. japonica (Rice).